The sequence spans 428 residues: Trigger factor (428 aa).

One can recognise a PPIase FKBP-type domain in the interval 163-248 (GDTAIIDFEG…INDVKVKELS (86 aa)).

It belongs to the FKBP-type PPIase family. Tig subfamily.

It localises to the cytoplasm. It catalyses the reaction [protein]-peptidylproline (omega=180) = [protein]-peptidylproline (omega=0). Its function is as follows. Involved in protein export. Acts as a chaperone by maintaining the newly synthesized protein in an open conformation. Functions as a peptidyl-prolyl cis-trans isomerase. This is Trigger factor from Clostridioides difficile (strain 630) (Peptoclostridium difficile).